Consider the following 372-residue polypeptide: MLKLVENVVGRVSEEENKVPEVQVPQSSIDEELKKIVEQIKARIYVVGVGGAGCNTVNRMMEVGVTGAKIIAVNTDAQDLLKVKAHQKILIGKELTRGLGAGNDPKIGEEAAKESERELRDALEGADMVFITCGLGGGTGTGAAPVIAEIARKMGALTVSVVTLPFTMEGIRRAKNAEYGLKRLVKYSDTVIVIPNDKLLEVAPKLPIQMAFKVADEILVQAVKGITELITKPGLVNLDFNDVRAVMKDGGVAMIGIGESDSEKRALEAAEQALNSPLLDVDISGATGALIHISGADVKLEEAQQIIEYVTRNVDPKAQVIWGIQLEPELEKTIRVMVVITGVTSRYITPEEETPLETPEESPSIEISIPEL.

Residues 51-55, 138-140, Glu169, Arg173, and Asp216 contribute to the GTP site; these read GAGCN and GTG. Residues 350–360 are compositionally biased toward acidic residues; the sequence is PEEETPLETPE. Positions 350–372 are disordered; that stretch reads PEEETPLETPEESPSIEISIPEL. Positions 361-372 are enriched in low complexity; it reads ESPSIEISIPEL.

It belongs to the FtsZ family. Homodimer. Polymerizes to form a dynamic ring structure in a strictly GTP-dependent manner. Interacts directly with several other division proteins.

It localises to the cytoplasm. Functionally, essential cell division protein that forms a contractile ring structure (Z ring) at the future cell division site. The regulation of the ring assembly controls the timing and the location of cell division. One of the functions of the FtsZ ring is to recruit other cell division proteins to the septum to produce a new cell wall between the dividing cells. Binds GTP and shows GTPase activity. The chain is Cell division protein FtsZ 1 from Pyrococcus furiosus (strain ATCC 43587 / DSM 3638 / JCM 8422 / Vc1).